Reading from the N-terminus, the 196-residue chain is Probable GTP-binding protein EngB (196 aa).

Residues 24-196 (ELSEVALSGR…IWNLIEPYIS (173 aa)) form the EngB-type G domain. GTP-binding positions include 32-39 (GRSNVGKS), 59-63 (GKTQT), 77-80 (DVPG), 144-147 (TKED), and 176-178 (YSS). Positions 39 and 61 each coordinate Mg(2+).

Belongs to the TRAFAC class TrmE-Era-EngA-EngB-Septin-like GTPase superfamily. EngB GTPase family. The cofactor is Mg(2+).

Necessary for normal cell division and for the maintenance of normal septation. In Staphylococcus aureus (strain Mu3 / ATCC 700698), this protein is Probable GTP-binding protein EngB.